Reading from the N-terminus, the 1101-residue chain is Helicase POLQ-like (1101 aa).

The disordered stretch occupies residues 212–261 (DLGDHSMKERDWKSSSHNTVNEELPHNCIEQPQQNDESSSKVRTSSDMNR). Positions 213-225 (LGDHSMKERDWKS) are enriched in basic and acidic residues. A compositionally biased stretch (polar residues) spans 241 to 258 (EQPQQNDESSSKVRTSSD). In terms of domain architecture, Helicase ATP-binding spans 346–518 (LNSVQERKNL…FLQAEYYTSQ (173 aa)). Residue 359 to 366 (LPTSGGKT) coordinates ATP. A DEAH box motif is present at residues 463–466 (DELH). The region spanning 566–758 (HLVALVTEVI…EFTKGIQTLF (193 aa)) is the Helicase C-terminal domain.

Belongs to the helicase family. SKI2 subfamily. Homodimer. Interacts with POLN. Interacts with RAD51B and RAD51C; promoting association with the BCDX2 complex. Interacts with the replication protein A (RPA/RP-A) complex. Interacts with RAD51; stimulating HELQ DNA helicase activity and ability to unwing DNA.

It localises to the nucleus. The protein localises to the chromosome. It carries out the reaction Couples ATP hydrolysis with the unwinding of duplex DNA by translocating in the 3'-5' direction.. The catalysed reaction is ATP + H2O = ADP + phosphate + H(+). ATPase activity is strongly stimulated by single-stranded DNA. Presence of ATP and Mg cofactor are required for helicase activity allowing to unwind duplex oligonucleotides up to 60-70-mer. This helicase activity is stimulated by replication protein A (RPA/RP-A) complex that binds to unwound regions and inhibits re-annealing. Single-stranded 3'-5' DNA helicase that plays a key role in homology-driven double-strand break (DSB) repair. Involved in different DSB repair mechanisms that are guided by annealing of extensive stretches of complementary bases at break ends, such as microhomology-mediated end-joining (MMEJ), single-strand annealing (SSA) or synthesis-dependent strand annealing (SDSA). Possesses both DNA unwinding and annealing activities. Forms a complex with RAD51, stimulating HELQ DNA helicase activity and ability to unwing DNA. Efficiently unwinds substrates containing 3' overhangs or a D-loop. In contrast, interaction with the replication protein A (RPA/RP-A) complex inhibits DNA unwinding by HELQ but strongly stimulates DNA strand annealing. Triggers displacement of RPA from single-stranded DNA to facilitate annealing of complementary sequences. This Homo sapiens (Human) protein is Helicase POLQ-like.